The following is a 255-amino-acid chain: Cyclase-like protein 1 (255 aa).

The signal sequence occupies residues 1–24 (MTRSVSFPLFLFAVVLSLSSSLLA).

It belongs to the Cyclase 1 superfamily.

The protein resides in the secreted. Its subcellular location is the extracellular space. It localises to the extracellular matrix. Acts as a negative regulator of fumonisin B1- and pathogen-induced programmed cell death (PCD), and regulates pathogen-induced symptom development. May function redundantly with CYCLASE2 for normal plant growth, development and viability. In Arabidopsis thaliana (Mouse-ear cress), this protein is Cyclase-like protein 1.